A 244-amino-acid polypeptide reads, in one-letter code: Tyrosine recombinase XerD-like (244 aa).

In terms of domain architecture, Core-binding (CB) spans 1 to 73 (MRDRISAFLE…ACNQFLYFLY (73 aa)). Positions 90–244 (AEKKTEKPEI…KTVLTLEKYR (155 aa)) constitute a Tyr recombinase domain. Catalysis depends on residues Lys150 and Arg211. Residue Tyr243 is the O-(3'-phospho-DNA)-tyrosine intermediate of the active site.

The protein belongs to the 'phage' integrase family. XerD-like subfamily.

It is found in the cytoplasm. Putative tyrosine recombinase. Not involved in the cutting and rejoining of the recombining DNA molecules on dif(SL) site. This Streptococcus pneumoniae (strain CGSP14) protein is Tyrosine recombinase XerD-like.